The primary structure comprises 324 residues: dITP/XTP pyrophosphatase (324 aa).

The segment at 1–127 (MTKTIFESKT…KNDNNFGDTI (127 aa)) is unknown. An NTP pyrophosphatase region spans residues 128 to 324 (LIATHNEGKT…EVFPKWQLEN (197 aa)). 131 to 136 (THNEGK) lines the substrate pocket. E164 and D193 together coordinate Mg(2+). Residue D193 is the Proton acceptor of the active site. Substrate contacts are provided by residues S194, 277 to 280 (FGYD), K300, and 305 to 306 (HR).

The protein belongs to the HAM1 NTPase family. In terms of assembly, homodimer. Mg(2+) is required as a cofactor.

It carries out the reaction XTP + H2O = XMP + diphosphate + H(+). The enzyme catalyses dITP + H2O = dIMP + diphosphate + H(+). It catalyses the reaction ITP + H2O = IMP + diphosphate + H(+). Its function is as follows. Pyrophosphatase that catalyzes the hydrolysis of nucleoside triphosphates to their monophosphate derivatives, with a high preference for the non-canonical purine nucleotides XTP (xanthosine triphosphate), dITP (deoxyinosine triphosphate) and ITP. Seems to function as a house-cleaning enzyme that removes non-canonical purine nucleotides from the nucleotide pool, thus preventing their incorporation into DNA/RNA and avoiding chromosomal lesions. This chain is dITP/XTP pyrophosphatase, found in Streptococcus agalactiae serotype III (strain NEM316).